Here is a 199-residue protein sequence, read N- to C-terminus: Large ribosomal subunit protein bL25 (199 aa).

This sequence belongs to the bacterial ribosomal protein bL25 family. CTC subfamily. In terms of assembly, part of the 50S ribosomal subunit; part of the 5S rRNA/L5/L18/L25 subcomplex. Contacts the 5S rRNA. Binds to the 5S rRNA independently of L5 and L18.

This is one of the proteins that binds to the 5S RNA in the ribosome where it forms part of the central protuberance. The protein is Large ribosomal subunit protein bL25 of Caulobacter sp. (strain K31).